Reading from the N-terminus, the 381-residue chain is 1-deoxy-D-xylulose 5-phosphate reductoisomerase (381 aa).

NADPH is bound by residues Thr10, Gly11, Ser12, Ile13, and Asn120. A 1-deoxy-D-xylulose 5-phosphate-binding site is contributed by Lys121. Glu122 is a binding site for NADPH. Asp146 serves as a coordination point for Mn(2+). The 1-deoxy-D-xylulose 5-phosphate site is built by Ser147, Glu148, Ser172, and His195. Glu148 serves as a coordination point for Mn(2+). Gly201 is an NADPH binding site. The 1-deoxy-D-xylulose 5-phosphate site is built by Ser208, Asn213, Lys214, and Glu217. Glu217 is a Mn(2+) binding site.

Belongs to the DXR family. The cofactor is Mg(2+). Mn(2+) is required as a cofactor.

The enzyme catalyses 2-C-methyl-D-erythritol 4-phosphate + NADP(+) = 1-deoxy-D-xylulose 5-phosphate + NADPH + H(+). It functions in the pathway isoprenoid biosynthesis; isopentenyl diphosphate biosynthesis via DXP pathway; isopentenyl diphosphate from 1-deoxy-D-xylulose 5-phosphate: step 1/6. Functionally, catalyzes the NADPH-dependent rearrangement and reduction of 1-deoxy-D-xylulose-5-phosphate (DXP) to 2-C-methyl-D-erythritol 4-phosphate (MEP). This chain is 1-deoxy-D-xylulose 5-phosphate reductoisomerase, found in Thermodesulfovibrio yellowstonii (strain ATCC 51303 / DSM 11347 / YP87).